Reading from the N-terminus, the 362-residue chain is Chromobox protein homolog 8 (362 aa).

Residues 11 to 69 form the Chromo domain; that stretch reads FAAEALLKRRIRKGRMEYLVKWKGWSQKYSTWEPEENILDARLLAAFEEREREMELYGP. A compositionally biased stretch (basic and acidic residues) spans 90 to 100; sequence KTYEFRSDSTR. The interval 90 to 197 is disordered; that stretch reads KTYEFRSDST…LGEPSAGLGE (108 aa). S110 bears the Phosphoserine mark. Over residues 142–162 the composition is skewed to basic and acidic residues; that stretch reads DPPRDRDRERDRGTSRVDDKP. Phosphoserine is present on residues S164 and S229. Y234 carries the post-translational modification Phosphotyrosine. Phosphoserine is present on residues S238, S284, S305, and S325.

In terms of assembly, component of a PRC1-like complex. Interacts with RING1, RNF2, PCGF1, PCGF2, PCGF3, BMI1, PCGF5, PCGF6 and PHC2. Interacts with histone H3. Interacts with MLLT3. Interacts with PHC2. Interacts (via chromodomain) with single-stranded RNA.

It is found in the nucleus. The protein localises to the chromosome. In terms of biological role, component of a Polycomb group (PcG) multiprotein PRC1-like complex, a complex class required to maintain the transcriptionally repressive state of many genes, including Hox genes, throughout development. PcG PRC1 complex acts via chromatin remodeling and modification of histones; it mediates monoubiquitination of histone H2A 'Lys-119', rendering chromatin heritably changed in its expressibility. The chain is Chromobox protein homolog 8 (Cbx8) from Mus musculus (Mouse).